We begin with the raw amino-acid sequence, 370 residues long: Probable endopolygalacturonase A (370 aa).

The signal sequence occupies residues methionine 1–alanine 19. Positions alanine 20 to arginine 32 are excised as a propeptide. A disulfide bridge links cysteine 35 with cysteine 50. PbH1 repeat units lie at residues serine 162–glutamate 192, serine 193–serine 214, glycine 215–serine 235, valine 244–threonine 265, valine 273–glutamine 295, and serine 307–glycine 352. The active-site Proton donor is the aspartate 207. Cysteines 209 and 225 form a disulfide. Histidine 229 is an active-site residue. N-linked (GlcNAc...) asparagine glycosylation is present at asparagine 246. Cystine bridges form between cysteine 335/cysteine 340 and cysteine 359/cysteine 368.

It belongs to the glycosyl hydrolase 28 family.

It localises to the secreted. The enzyme catalyses (1,4-alpha-D-galacturonosyl)n+m + H2O = (1,4-alpha-D-galacturonosyl)n + (1,4-alpha-D-galacturonosyl)m.. Involved in maceration and soft-rotting of plant tissue. Hydrolyzes the 1,4-alpha glycosidic bonds of de-esterified pectate in the smooth region of the plant cell wall. This is Probable endopolygalacturonase A (pgaA) from Aspergillus niger (strain ATCC MYA-4892 / CBS 513.88 / FGSC A1513).